The chain runs to 102 residues: Small ribosomal subunit protein uS10 (102 aa).

Belongs to the universal ribosomal protein uS10 family. In terms of assembly, part of the 30S ribosomal subunit.

Its function is as follows. Involved in the binding of tRNA to the ribosomes. This chain is Small ribosomal subunit protein uS10, found in Leptospira biflexa serovar Patoc (strain Patoc 1 / Ames).